Here is a 630-residue protein sequence, read N- to C-terminus: MDFPSRFEVIVIGGGHAGTEAALASARMGVKTLLLTHNVETLGHMSCNPAIGGIGKSHLVKEIDALGGAMALATDKSGIQFRVLNNRKGPAVRATRAQADRAIYKAVVREILENQPNLWIFQQSCDDLIVEQDQVKGVVTQMGLRFFADSVVLTTGTFLGGLIHIGLQNHSGGRAGDPPSIALAHRMRELPLRVGRLKTGTPPRIDGRSVDFSVMTEQPGDTPIPVMSFMGNAAMHPRQVSCWITHTNARTHEIIASNLDRSPMYSGVIEGVGPRYCPSIEDKIHRFADKESHQVFIEPEGLTTHELYPNGISTSLPFDVQLELVRSIRGMENAHIVRPGYAIEYDYFDPRDLKYSLETKVIGGLFFAGQINGTTGYEEAGAQGLLAGTNAALRAQGRESWCPRRDEAYIGVLVDDLITLGTQEPYRMFTSRAEYRLILREDNADLRLTEKGRELGLIDDQRWAAFCAKRDGIEREEQRLKSTWVRPNTPQGQAVVDKFGTPLSHEYSLLNLLARPEVDYAGLIEATGGEQIDPQVAEQVEIKTKYAGYIDRQQDEIARLRASEDTCLPVDIDYTSISGLSKEIQGKLGQTRPQTLGQASRIPGVTPAAISLLLIHLKKRGAGRELEQSA.

13–18 (GGGHAG) contributes to the FAD binding site. Residue 273-287 (GPRYCPSIEDKIHRF) coordinates NAD(+).

Belongs to the MnmG family. In terms of assembly, homodimer. Heterotetramer of two MnmE and two MnmG subunits. FAD serves as cofactor.

The protein localises to the cytoplasm. Its function is as follows. NAD-binding protein involved in the addition of a carboxymethylaminomethyl (cmnm) group at the wobble position (U34) of certain tRNAs, forming tRNA-cmnm(5)s(2)U34. The chain is tRNA uridine 5-carboxymethylaminomethyl modification enzyme MnmG from Pseudomonas putida (strain W619).